Consider the following 307-residue polypeptide: Protoheme IX farnesyltransferase (307 aa).

9 helical membrane passes run 31 to 51 (VTQL…PGMV), 55 to 75 (VLIG…AINC), 103 to 123 (TLVF…VYAN), 125 to 145 (LTMW…TILL), 153 to 173 (IVIG…AVAG), 179 to 199 (AWFL…ALAL), 223 to 243 (LLHI…PFVY), 246 to 266 (SGYI…AYAW), and 285 to 305 (ILYL…KFVP).

The protein belongs to the UbiA prenyltransferase family. Protoheme IX farnesyltransferase subfamily.

It is found in the cell inner membrane. The catalysed reaction is heme b + (2E,6E)-farnesyl diphosphate + H2O = Fe(II)-heme o + diphosphate. Its pathway is porphyrin-containing compound metabolism; heme O biosynthesis; heme O from protoheme: step 1/1. In terms of biological role, converts heme B (protoheme IX) to heme O by substitution of the vinyl group on carbon 2 of heme B porphyrin ring with a hydroxyethyl farnesyl side group. This is Protoheme IX farnesyltransferase from Cupriavidus necator (strain ATCC 17699 / DSM 428 / KCTC 22496 / NCIMB 10442 / H16 / Stanier 337) (Ralstonia eutropha).